The chain runs to 196 residues: Vascular-related unknown protein 2 (196 aa).

The tract at residues 84 to 130 (ANNINTNPKKRRIIHQHKEEEEEELQKGEEEEEDEEDTASSPSNKTK) is disordered. The span at 103-121 (EEEEELQKGEEEEEDEEDT) shows a compositional bias: acidic residues.

In terms of biological role, involved in the regulation of plant growth. This is Vascular-related unknown protein 2 from Arabidopsis thaliana (Mouse-ear cress).